The following is a 377-amino-acid chain: Chaperone protein DnaJ (377 aa).

The region spanning 5-70 is the J domain; the sequence is DFYEVLGVER…SKRAAYDQYG (66 aa). The CR-type zinc-finger motif lies at 136 to 214; it reads GTTVTIRVPT…CHGQGRVEEQ (79 aa). The Zn(2+) site is built by cysteine 149, cysteine 152, cysteine 166, cysteine 169, cysteine 188, cysteine 191, cysteine 202, and cysteine 205. CXXCXGXG motif repeat units follow at residues 149–156, 166–173, 188–195, and 202–209; these read CKTCNGSG, CTTCGGIG, CPRCHGTG, and CGSCHGQG.

This sequence belongs to the DnaJ family. In terms of assembly, homodimer. The cofactor is Zn(2+).

The protein resides in the cytoplasm. Its function is as follows. Participates actively in the response to hyperosmotic and heat shock by preventing the aggregation of stress-denatured proteins and by disaggregating proteins, also in an autonomous, DnaK-independent fashion. Unfolded proteins bind initially to DnaJ; upon interaction with the DnaJ-bound protein, DnaK hydrolyzes its bound ATP, resulting in the formation of a stable complex. GrpE releases ADP from DnaK; ATP binding to DnaK triggers the release of the substrate protein, thus completing the reaction cycle. Several rounds of ATP-dependent interactions between DnaJ, DnaK and GrpE are required for fully efficient folding. Also involved, together with DnaK and GrpE, in the DNA replication of plasmids through activation of initiation proteins. The sequence is that of Chaperone protein DnaJ from Pseudomonas aeruginosa (strain LESB58).